The primary structure comprises 244 residues: MSDRLAELERAIGITFRDRTLLQTAFMHRSLFNEQPHLLNHLTDNERLEFLGDSVLHFVTTTWLFETFPDQDEATLTNWRAALVSTKGLAECAAQFNLGQYAYLSRGEDNPGGRSRQKLLADLFEALVGAIYLDQGLETARAFIVPFWQARIEQIIHIDLDPTTRLQELMQARFKQLPDYSIEEERGPEHQREYVMAVTVAGRKFTGSGSSKKEAKRAAARKALAAWDKHGFTATAIDAQDERN.

The region spanning 5–136 (LAELERAIGI…LVGAIYLDQG (132 aa)) is the RNase III domain. E49 serves as a coordination point for Mg(2+). D53 is a catalytic residue. Positions 122 and 125 each coordinate Mg(2+). Residue E125 is part of the active site. The 69-residue stretch at 161–229 (DPTTRLQELM…ARKALAAWDK (69 aa)) folds into the DRBM domain.

The protein belongs to the ribonuclease III family. Homodimer. Requires Mg(2+) as cofactor.

It localises to the cytoplasm. The enzyme catalyses Endonucleolytic cleavage to 5'-phosphomonoester.. Its function is as follows. Digests double-stranded RNA. Involved in the processing of primary rRNA transcript to yield the immediate precursors to the large and small rRNAs (23S and 16S). Processes some mRNAs, and tRNAs when they are encoded in the rRNA operon. Processes pre-crRNA and tracrRNA of type II CRISPR loci if present in the organism. The sequence is that of Ribonuclease 3 from Chloroflexus aurantiacus (strain ATCC 29364 / DSM 637 / Y-400-fl).